We begin with the raw amino-acid sequence, 505 residues long: T-cell activation inhibitor, mitochondrial (505 aa).

A coiled-coil region spans residues 216–243 (LKNSLPLRKELDRLKNELSELLQLSDIR).

Expressed in peripheral blood leukocytes, mainly in T-lymphocytes.

It is found in the mitochondrion. May regulate T-cell apoptosis. In Rattus norvegicus (Rat), this protein is T-cell activation inhibitor, mitochondrial (Tcaim).